Reading from the N-terminus, the 65-residue chain is MPKIKTNRAAAKRFKKTGSGKVKYSKSFGSHILAKKSRKRKRDLRQSHILDEANMKNIKRLLPYW.

Disordered regions lie at residues 1–23 (MPKI…GKVK) and 29–48 (GSHI…RQSH). Residues 33-43 (LAKKSRKRKRD) are compositionally biased toward basic residues.

Belongs to the bacterial ribosomal protein bL35 family.

This Desulfatibacillum aliphaticivorans protein is Large ribosomal subunit protein bL35.